A 651-amino-acid polypeptide reads, in one-letter code: A-type voltage-gated potassium channel KCND1 (651 aa).

Over 1–183 (MAAGVATWLP…RAFENPHTST (183 aa)) the chain is Cytoplasmic. Positions 2-20 (AAGVATWLPFARAAAVGWL) are interaction with KCNIP1, KCNIP2, and other family members. The Zn(2+) site is built by His-104, Cys-131, and Cys-132. Residues 144–164 (AERLAEDEEAEQAGEGPALPA) are disordered. Residues 184-205 (AALVFYYVTGFFIAVSVIANVV) form a helical membrane-spanning segment. Topologically, residues 206-230 (ETIPCRGTPRWPSKEQSCGDRFPTA) are extracellular. Residues 231–252 (FFCMDTACVLIFTGEYLLRLFA) traverse the membrane as a helical segment. Residues 253 to 263 (APSRCRFLRSV) lie on the Cytoplasmic side of the membrane. A helical membrane pass occupies residues 264–284 (MSLIDVVAILPYYIGLFVPKN). Topologically, residues 285–287 (DDV) are extracellular. A helical; Voltage-sensor membrane pass occupies residues 288-308 (SGAFVTLRVFRVFRIFKFSRH). Residues 309-323 (SQGLRILGYTLKSCA) are Cytoplasmic-facing. Residues 310–323 (QGLRILGYTLKSCA) form an S4-S5 linker region. A helical transmembrane segment spans residues 324-345 (SELGFLLFSLTMAIIIFATVMF). Residues 346–359 (YAEKGTSKTNFTSI) are Extracellular-facing. An N-linked (GlcNAc...) asparagine glycan is attached at Asn-355. Residues 360–371 (PAAFWYTIVTMT) constitute an intramembrane region (helical). A Selectivity filter motif is present at residues 372–377 (TLGYGD). The stretch at 372 to 379 (TLGYGDMV) is an intramembrane region. The Extracellular portion of the chain corresponds to 380–386 (PSTIAGK). A helical transmembrane segment spans residues 387 to 415 (IFGSICSLSGVLVIALPVPVIVSNFSRIY). The Cytoplasmic segment spans residues 416–651 (HQNQRADKRR…LPETVKISSL (236 aa)). Ser-458 is subject to Phosphoserine. The required for dendritic targeting stretch occupies residues 474-489 (FEQQHHHLLHCLEKTT). At Ser-555 the chain carries Phosphoserine. 2 disordered regions span residues 566–585 (RRSP…HDSL) and 601–651 (IPTP…ISSL). Residues 626-637 (TPNTTLRNSSLG) show a composition bias toward polar residues.

Belongs to the potassium channel family. D (Shal) (TC 1.A.1.2) subfamily. Kv4.1/KCND1 sub-subfamily. In terms of assembly, component of heteromultimeric potassium channels. Identified in potassium channel complexes containing KCND1, KCND2, KCND3, KCNIP1, KCNIP2, KCNIP3, KCNIP4, DPP6 and DPP10.

Its subcellular location is the cell membrane. It catalyses the reaction K(+)(in) = K(+)(out). In terms of biological role, A-type voltage-gated potassium channel that mediates transmembrane potassium transport in excitable membranes in the brain. Mediates A-type current I(SA) in suprachiasmatic nucleus (SCN) neurons. Exhibits a low-threshold A-type current with a hyperpolarized steady-state inactivation midpoint and the recovery process was steeply voltage-dependent, with recovery being markedly faster at more negative potentials. May regulates repetitive firing rates in the suprachiasmatic nucleus (SCN) neurons and circadian rhythms in neuronal excitability and behavior. Contributes to the regulation of the circadian rhythm of action potential firing in suprachiasmatic nucleus neurons, which regulates the circadian rhythm of locomotor activity. The regulatory subunit KCNIP1 modulates the kinetics of channel inactivation, increases the current amplitudes and accelerates recovery from inactivation, shifts activation in a depolarizing direction. The regulatory subunit DPP10 decreases the voltage sensitivity of the inactivation channel gating. The chain is A-type voltage-gated potassium channel KCND1 from Mus musculus (Mouse).